A 163-amino-acid chain; its full sequence is Deoxyuridine 5'-triphosphate nucleotidohydrolase (163 aa).

Substrate-binding positions include 78–80 (RSG), asparagine 91, and 95–97 (TVD). Basic and acidic residues predominate over residues 140 to 151 (ERESLNETERGD). The interval 140–163 (ERESLNETERGDGGFGHTGVNSQP) is disordered.

It belongs to the dUTPase family. Mg(2+) serves as cofactor.

It catalyses the reaction dUTP + H2O = dUMP + diphosphate + H(+). The protein operates within pyrimidine metabolism; dUMP biosynthesis; dUMP from dCTP (dUTP route): step 2/2. Functionally, this enzyme is involved in nucleotide metabolism: it produces dUMP, the immediate precursor of thymidine nucleotides and it decreases the intracellular concentration of dUTP so that uracil cannot be incorporated into DNA. In Heliobacterium modesticaldum (strain ATCC 51547 / Ice1), this protein is Deoxyuridine 5'-triphosphate nucleotidohydrolase.